The primary structure comprises 395 residues: MATVDRWLLPDGIEEVLPPEAARIEIARRQVLDLFQSWGYELVVTPHIEYLESLLTGAGQDLDQRTFKVVDPQSGRLMGFRADFTPQVARIDAHTLRREGPSRLCYAGSVLHAQPRALSTSRSPIQLGAELYGDASPTSDVEVISLMLATLQLADVPDVHMDLGHVGIYRGLARAAGLSGAVEQQLFDAMQRKAVDEVQALTADLPKDLGSMLRALVELCGGREVLAEARVRLGRAPASVLAALDDLLAIADRLASRYPDLPLYFDLGELRGYHYHTGVVFAVFVPGEGQSIAQGGRYDDIGADFGRARPATGFSTDLKTLVTLGRAEVVLPTGGIWMPDSGDAALWQQVCQLRNEGQRVVQALPGQPLSAALEADCDRQLIQQDGRWQVLPLAQ.

Belongs to the class-II aminoacyl-tRNA synthetase family. HisZ subfamily. In terms of assembly, heteromultimer composed of HisG and HisZ subunits.

It localises to the cytoplasm. Its pathway is amino-acid biosynthesis; L-histidine biosynthesis; L-histidine from 5-phospho-alpha-D-ribose 1-diphosphate: step 1/9. Functionally, required for the first step of histidine biosynthesis. May allow the feedback regulation of ATP phosphoribosyltransferase activity by histidine. In Pseudomonas putida (strain ATCC 700007 / DSM 6899 / JCM 31910 / BCRC 17059 / LMG 24140 / F1), this protein is ATP phosphoribosyltransferase regulatory subunit.